The sequence spans 468 residues: Probable citrate synthase, mitochondrial (468 aa).

Residues His303, His349, and Asp404 contribute to the active site.

This sequence belongs to the citrate synthase family. In terms of assembly, homodimer.

It is found in the mitochondrion matrix. The enzyme catalyses oxaloacetate + acetyl-CoA + H2O = citrate + CoA + H(+). It functions in the pathway carbohydrate metabolism; tricarboxylic acid cycle; isocitrate from oxaloacetate: step 1/2. This chain is Probable citrate synthase, mitochondrial (cts-1), found in Caenorhabditis elegans.